We begin with the raw amino-acid sequence, 203 residues long: Large ribosomal subunit protein bL25 (203 aa).

It belongs to the bacterial ribosomal protein bL25 family. CTC subfamily. As to quaternary structure, part of the 50S ribosomal subunit; part of the 5S rRNA/L5/L18/L25 subcomplex. Contacts the 5S rRNA. Binds to the 5S rRNA independently of L5 and L18.

Functionally, this is one of the proteins that binds to the 5S RNA in the ribosome where it forms part of the central protuberance. The polypeptide is Large ribosomal subunit protein bL25 (Wolbachia pipientis wMel).